The sequence spans 179 residues: Protein GrpE (179 aa).

The span at 1-14 (MSKKDKKEEIKEEV) shows a compositional bias: basic and acidic residues. The disordered stretch occupies residues 1–40 (MSKKDKKEEIKEEVEATEPTTEESVEEVAEETSENKELQE). Over residues 15-32 (EATEPTTEESVEEVAEET) the composition is skewed to acidic residues.

The protein belongs to the GrpE family. In terms of assembly, homodimer.

The protein resides in the cytoplasm. Its function is as follows. Participates actively in the response to hyperosmotic and heat shock by preventing the aggregation of stress-denatured proteins, in association with DnaK and GrpE. It is the nucleotide exchange factor for DnaK and may function as a thermosensor. Unfolded proteins bind initially to DnaJ; upon interaction with the DnaJ-bound protein, DnaK hydrolyzes its bound ATP, resulting in the formation of a stable complex. GrpE releases ADP from DnaK; ATP binding to DnaK triggers the release of the substrate protein, thus completing the reaction cycle. Several rounds of ATP-dependent interactions between DnaJ, DnaK and GrpE are required for fully efficient folding. This is Protein GrpE from Streptococcus mutans serotype c (strain ATCC 700610 / UA159).